The sequence spans 174 residues: B3 domain-containing protein At3g06220 (174 aa).

Residues 8–101 (PRFYTVFLSC…SYEVSIYGRG (94 aa)) constitute a DNA-binding region (TF-B3). Positions 114–174 (EISDESESDN…ISDASDSDYY (61 aa)) are disordered. Composition is skewed to acidic residues over residues 139 to 150 (ENSDDTEGDNDS) and 164 to 174 (EISDASDSDYY).

It is found in the nucleus. The polypeptide is B3 domain-containing protein At3g06220 (Arabidopsis thaliana (Mouse-ear cress)).